Consider the following 227-residue polypeptide: UPF0758 protein Psyc_1834 (227 aa).

The 123-residue stretch at 102-224 folds into the MPN domain; sequence GLGRSQMVKD…TLSYAENCLA (123 aa). Zn(2+) is bound by residues His173, His175, and Asp186. Residues 173–186 carry the JAMM motif motif; that stretch reads HNHPHTDATPSTAD.

Belongs to the UPF0758 family.

The chain is UPF0758 protein Psyc_1834 from Psychrobacter arcticus (strain DSM 17307 / VKM B-2377 / 273-4).